Here is a 148-residue protein sequence, read N- to C-terminus: Hemoglobin subunit beta-4 (148 aa).

The Globin domain maps to 3–148 (DWTDPERSAI…VVSALGRQYH (146 aa)). His-64 and His-93 together coordinate heme b.

The protein belongs to the globin family. As to quaternary structure, heterotetramer of two alpha chains and two beta chains. As to expression, red blood cells.

In terms of biological role, involved in oxygen transport from gills to the various peripheral tissues. The protein is Hemoglobin subunit beta-4 (hbb4) of Oncorhynchus mykiss (Rainbow trout).